The following is a 278-amino-acid chain: Large ribosomal subunit protein uL2 (278 aa).

The disordered stretch occupies residues 214–278 (WLGKRPHNRG…IMRSRHQRKS (65 aa)).

It belongs to the universal ribosomal protein uL2 family. In terms of assembly, part of the 50S ribosomal subunit. Forms a bridge to the 30S subunit in the 70S ribosome.

Functionally, one of the primary rRNA binding proteins. Required for association of the 30S and 50S subunits to form the 70S ribosome, for tRNA binding and peptide bond formation. It has been suggested to have peptidyltransferase activity; this is somewhat controversial. Makes several contacts with the 16S rRNA in the 70S ribosome. This is Large ribosomal subunit protein uL2 from Chelativorans sp. (strain BNC1).